The following is a 1076-amino-acid chain: MTTANCGAHDELDFKLVFGEDGAPTPVSQVSRPADLEPDDCASIYIFNVDPPPSTLNSSLGLPHHGLLQSHSSVLSPSFQLQGFKNYEGTDDISESKYSSLSGPKPFECPSIQITSISPNCHQETDAHEDDLHVNDPEREYLERPSRDHLYLPLEPSYRESSLSPSPASSVSSRSWFSDASSCESLSHIYDDVDSELNEAAARFTLGSPLTSPGGSPGGCPGEESWHQQYGPGHSLSPRQSPCHSPRSSITDENWLSPRPASGPSSRPTSPCGKRRHSSAEVCYAGSLSPHHSPVPSPGHSPRGSVTEDTWLTAPVHTGSGLSPAPFPFQYCVETDIPLKTRKTSDDQAAILPGKLEVCSDDQGSLSPSRETSVDDGLGSQYPLKKDSSGDQFLSVPSPFTWSKPKPGHTPIFRTSSLPPLDWPLPTHFGQCELKIEVQPKTHHRAHYETEGSRGAVKASTGGHPVVKLLGYSEKPINLQMFIGTADDRYLRPHAFYQVHRITGKTVATASQEIIIASTKVLEIPLLPENNMSASIDCAGILKLRNSDIELRKGETDIGRKNTRVRLVFRVHIPQPSGKVLSLQIASIPVECSQRSAQELPHIEKYSINSCSVNGGHEMIVTGSNFLPESKIIFLEKGQDGRPHWEAEGKIIREKCQGGHIVLEVPPYHNPAVTSAVQVHFYLCNGKRKKSQSQRFTYTPVLMKQEQREDTDLSSVPSLPVPHSAQTQRPSSDTGHPHDSALSAPRSLICPVQPAYASMITSTHLPQLQCRDEGAGKEQHIIPSSVMHQPFQVTPTSPMGSSYQSIQTNMYNGPTCLPMNPASSQEFDPVLFQQDAALSNLVNLGCQPLSPIPFHSSNSDATGHLLAHSPHSVQTPPHLQSMGYHCSSAGQRSLSSPVAAQVTGQPSSHLQPITYCPSHPGSATAASPAASHALSSSPISGPPSPQLQSMPYQSPSSGTASSPSPVTRMHSGQHSTQAQSTGQGGLSVPSSLVCHSLCDPASFPPGGAAVSIKPEPEDQEPNFATIGLQDITLDDVNEIIGRDMSQITVSQGPEVIRDAPLPGPESPDVMSSNSAQ.

T2 is subject to N-acetylthreonine. The interval 110 to 115 is calcineurin-binding; sequence PSIQIT. The segment at 206 to 307 is disordered; that stretch reads LGSPLTSPGG…PGHSPRGSVT (102 aa). 2 consecutive repeat copies span residues 208–224 and 237–253. The interval 208 to 309 is 3 X SP repeats; the sequence is SPLTSPGGSP…HSPRGSVTED (102 aa). Residues 237–254 are compositionally biased toward polar residues; that stretch reads SPRQSPCHSPRSSITDEN. The segment covering 257-271 has biased composition (low complexity); sequence SPRPASGPSSRPTSP. Residues 274-276 carry the Nuclear localization signal motif; the sequence is KRR. The stretch at 293-309 is repeat 3; it reads SPVPSPGHSPRGSVTED. S345 is modified (phosphoserine). The disordered stretch occupies residues 359–390; that stretch reads CSDDQGSLSPSRETSVDDGLGSQYPLKKDSSG. Residues 362–371 show a composition bias toward polar residues; sequence DQGSLSPSRE. Position 373 is a phosphoserine (S373). In terms of domain architecture, RHD spans 416–597; sequence SSLPPLDWPL…IPVECSQRSA (182 aa). The DNA-binding element occupies 445–452; sequence RAHYETEG. A Nuclear localization signal motif is present at residues 687–689; the sequence is KRK. 2 disordered regions span residues 700-744 and 863-987; these read PVLM…ALSA and GHLL…GGLS. A compositionally biased stretch (low complexity) spans 713–722; sequence LSSVPSLPVP. Composition is skewed to polar residues over residues 724–734 and 888–911; these read SAQTQRPSSDT and SAGQRSLSSPVAAQVTGQPSSHLQ. Composition is skewed to low complexity over residues 917–939 and 946–965; these read PSHPGSATAASPAASHALSSSPI and QLQSMPYQSPSSGTASSPSP. Residues 970 to 981 are compositionally biased toward polar residues; it reads HSGQHSTQAQST. The Nuclear export signal motif lies at 1032–1041; the sequence is TLDDVNEIIG. The tract at residues 1049–1076 is disordered; the sequence is VSQGPEVIRDAPLPGPESPDVMSSNSAQ. A Phosphoserine modification is found at S1066.

As to quaternary structure, NFATC proteins bind to DNA as monomers. Member of the multicomponent NFATC transcription complex that consists of at least two components, a pre-existing cytoplasmic component NFATC2 and an inducible nuclear component NFATC1. Other members such as NFATC4, or members of the activating protein-1 family, MAF, GATA4 and Cbp/p300 can also bind the complex. Component of a promoter-binding complex composed of STAT3, NFATC3 and NFATC4; complex formation is enhanced by calcineurin. Interacts with TRIM17; this interaction prevents NFATC3 nuclear localization. Interacts with and ubiquitinated by STUB1/CHIP; HSPA1A/HSP70 is required as a co-chaperone. Post-translationally, phosphorylated by NFATC-kinase; dephosphorylated by calcineurin. Ubiquitinated by STUB1/CHIP, leading to proteasomal degradation. In terms of tissue distribution, expressed in cardiomyocytes (at protein level).

The protein resides in the cytoplasm. The protein localises to the nucleus. In terms of biological role, acts as a regulator of transcriptional activation. Binds to the TNFSF11/RANKL promoter region and promotes TNFSF11 transcription. Binding to the TNFSF11 promoter region is increased by high levels of Ca(2+) which induce NFATC3 expression and may lead to regulation of TNFSF11 expression in osteoblasts. Plays a role in promoting mesenteric arterial wall remodeling in response to the intermittent hypoxia-induced increase in EDN1 and ROCK signaling. As a result NFATC3 colocalizes with F-actin filaments, translocates to the nucleus and promotes transcription of the smooth muscle hypertrophy and differentiation marker ACTA2. Promotes lipopolysaccharide-induced apoptosis and hypertrophy in cardiomyocytes. Following JAK/STAT signaling activation and as part of a complex with NFATC4 and STAT3, binds to the alpha-beta E4 promoter region of CRYAB and activates transcription in cardiomyocytes. In conjunction with NFATC4, involved in embryonic heart development via maintenance of cardiomyocyte survival, proliferation and differentiation. Plays a role in the inducible expression of cytokine genes in T-cells, especially in the induction of the IL-2. Required for thymocyte maturation during DN3 to DN4 transition and during positive selection. Positively regulates macrophage-derived polymicrobial clearance, via binding to the promoter region and promoting transcription of NOS2 resulting in subsequent generation of nitric oxide. Involved in Ca(2+)-mediated transcriptional responses upon Ca(2+) influx via ORAI1 CRAC channels. This Rattus norvegicus (Rat) protein is Nuclear factor of activated T-cells, cytoplasmic 3.